Reading from the N-terminus, the 123-residue chain is Large ribosomal subunit protein bL12 (123 aa).

The protein belongs to the bacterial ribosomal protein bL12 family. Homodimer. Part of the ribosomal stalk of the 50S ribosomal subunit. Forms a multimeric L10(L12)X complex, where L10 forms an elongated spine to which 2 to 4 L12 dimers bind in a sequential fashion. Binds GTP-bound translation factors.

In terms of biological role, forms part of the ribosomal stalk which helps the ribosome interact with GTP-bound translation factors. Is thus essential for accurate translation. The sequence is that of Large ribosomal subunit protein bL12 from Shewanella sp. (strain ANA-3).